The chain runs to 167 residues: MNTLQKGFTLIELMIVIAIVGILAAVALPAYQDYTARAQVSEAILLAEGQKSAVTEYYLNHGIWPKDNTSAGVASSSSIKGKYVKEVKVENGVVTATMNSSNVNKEIQGKKLSLWAKRQDGSVKWFCGQPVTRNAKDDTVTADATGNDGKIDTKHLPSTCRDNFDAS.

A propeptide spans 1–7 (leader sequence); the sequence is MNTLQKG. An N-methylphenylalanine modification is found at F8. A helical transmembrane segment spans residues 8 to 28; the sequence is FTLIELMIVIAIVGILAAVAL. O-linked (GlcNAc...) serine glycosylation occurs at S70. C127 and C160 are joined by a disulfide.

The protein belongs to the N-Me-Phe pilin family. As to quaternary structure, the pili are polar flexible filaments of about 5.4 nanometers diameter and 2.5 micrometers average length; they consist of only a single polypeptide chain arranged in a helical configuration of five subunits per turn in the assembled pilus.

It localises to the fimbrium. The protein resides in the membrane. Functionally, major component of the type IV pilus (T4P) that plays a role in cellular adherence, microcolony formation, resistance to neutrophil mediated killing, twitching motility as well as transformation. Mediates the attachment and the formation of bacterial microcolonies on host epithelial cells. Mechanistically, pili retractation induces host NF-kappa-B activation in infected cells, which is temporally associated with the formation of gonococcal microcolonies. This chain is Type IV major pilin protein PilE (pilE), found in Neisseria gonorrhoeae.